A 52-amino-acid polypeptide reads, in one-letter code: uncharacterized protein (52 aa).

A helical transmembrane segment spans residues 21–40 (VAMNSYVELLFLSVPLIHIF).

It localises to the cell membrane. This is an uncharacterized protein from Bacillus subtilis (strain 168).